Reading from the N-terminus, the 1557-residue chain is ABC transporter atnG (1557 aa).

5 consecutive transmembrane segments (helical) span residues phenylalanine 27–alanine 47, leucine 70–methionine 90, leucine 99–histidine 119, isoleucine 131–tryptophan 151, and valine 159–tryptophan 179. Residues asparagine 202 and asparagine 249 are each glycosylated (N-linked (GlcNAc...) asparagine). 6 consecutive transmembrane segments (helical) span residues alanine 256 to phenylalanine 276, alanine 311 to threonine 331, tyrosine 385 to asparagine 405, isoleucine 412 to alanine 432, leucine 490 to phenylalanine 510, and leucine 531 to isoleucine 551. The ABC transmembrane type-1 1 domain maps to leucine 279 to methionine 556. Residues alanine 593–alanine 829 enclose the ABC transporter 1 domain. Glycine 625 to threonine 632 is an ATP binding site. Asparagine 667 carries N-linked (GlcNAc...) asparagine glycosylation. A helical transmembrane segment spans residues leucine 882 to valine 902. Residues leucine 882–threonine 1162 form the ABC transmembrane type-1 2 domain. Residue asparagine 916 is glycosylated (N-linked (GlcNAc...) asparagine). The next 4 membrane-spanning stretches (helical) occupy residues isoleucine 921 to phenylalanine 941, alanine 996 to valine 1016, tyrosine 1020 to methionine 1040, and leucine 1105 to valine 1125. The N-linked (GlcNAc...) asparagine glycan is linked to asparagine 1132. The helical transmembrane segment at serine 1135 to threonine 1155 threads the bilayer. In terms of domain architecture, ABC transporter 2 spans valine 1199 to serine 1431. N-linked (GlcNAc...) asparagine glycosylation is found at asparagine 1203 and asparagine 1218. An ATP-binding site is contributed by glycine 1233 to serine 1240. Disordered regions lie at residues glutamate 1439–arginine 1464 and arginine 1503–histidine 1557. Residues arginine 1507 to serine 1522 show a composition bias toward basic and acidic residues.

Belongs to the ABC transporter superfamily. ABCC family. Conjugate transporter (TC 3.A.1.208) subfamily.

It is found in the cell membrane. ABC transporter; part of the gene cluster that mediates the biosynthesis of aspercryptins, linear lipopeptides built from six amino acids including 2 highly unusual and nonproteogenic amino acids, 2-amino-octanoic acid (2aoa) and 2-amino-dodecanol (2adol). This Emericella nidulans (strain FGSC A4 / ATCC 38163 / CBS 112.46 / NRRL 194 / M139) (Aspergillus nidulans) protein is ABC transporter atnG.